The sequence spans 466 residues: Uronate isomerase (466 aa).

This sequence belongs to the metallo-dependent hydrolases superfamily. Uronate isomerase family.

The catalysed reaction is D-glucuronate = D-fructuronate. It catalyses the reaction aldehydo-D-galacturonate = keto-D-tagaturonate. The protein operates within carbohydrate metabolism; pentose and glucuronate interconversion. The sequence is that of Uronate isomerase from Streptococcus pneumoniae (strain 70585).